Reading from the N-terminus, the 235-residue chain is Protein shisa-5 (235 aa).

A signal peptide spans 1–26 (MAAPAPSLWTLLLLLLLLPPPPGAHG). Topologically, residues 27-105 (ELCRPFGEDN…SSFDSDPMSG (79 aa)) are extracellular. A helical transmembrane segment spans residues 106–126 (FGATVAIGVTIFVVFIATIII). The Cytoplasmic segment spans residues 127 to 235 (CFTCSCCCLY…TYMDSLKTIP (109 aa)). The segment at 157–235 (APYPQPQPQP…TYMDSLKTIP (79 aa)) is disordered. 2 stretches are compositionally biased toward pro residues: residues 159 to 172 (YPQP…PSYP) and 181 to 211 (PMPP…PPPY).

It belongs to the shisa family. In terms of assembly, interacts with PDCD6; PDCD6 can stabilize SHISA5. Spleen and thymus.

It localises to the endoplasmic reticulum membrane. It is found in the nucleus membrane. Can induce apoptosis in a caspase-dependent manner and plays a role in p53/TP53-dependent apoptosis. This Mus musculus (Mouse) protein is Protein shisa-5 (Shisa5).